Consider the following 266-residue polypeptide: MICOS complex subunit MIC27 (266 aa).

A mitochondrion-targeting transit peptide spans 1-27 (MAAIRMGKLTTMPAGLIYASVSVHAAK). Residues 28 to 110 (EEESKKQLVK…YVYMKNPPRD (83 aa)) are Mitochondrial intermembrane-facing. The helical transmembrane segment at 111 to 129 (FLPKMGVITVSGLAGLVSA) threads the bilayer. Over 130-137 (RKGSKFKK) the chain is Mitochondrial matrix. A helical membrane pass occupies residues 138–155 (ITYPLGLATLGATVCYPV). Residues 156 to 266 (QSVIIAKVTA…NVTNSGVLRI (111 aa)) are Mitochondrial intermembrane-facing. Position 204 is a phosphoserine (S204).

It belongs to the apolipoprotein O/MICOS complex subunit Mic27 family. As to quaternary structure, component of the mitochondrial contact site and cristae organizing system (MICOS) complex, composed of at least MICOS10/MIC10, CHCHD3/MIC19, CHCHD6/MIC25, APOOL/MIC27, IMMT/MIC60, APOO/MIC23/MIC26 and MICOS13/MIC13. This complex was also known under the names MINOS or MitOS complex. The MICOS complex associates with mitochondrial outer membrane proteins SAMM50, MTX1 and MTX2 (together described as components of the mitochondrial outer membrane sorting assembly machinery (SAM) complex) and DNAJC11, mitochondrial inner membrane protein TMEM11 and with HSPA9. The MICOS and SAM complexes together with DNAJC11 are part of a large protein complex spanning both membranes termed the mitochondrial intermembrane space bridging (MIB) complex. Interacts with MICOS10/MIC10, IMMT/MIC60 and APOO/MIC23/MIC26.

It is found in the mitochondrion inner membrane. Its subcellular location is the mitochondrion. Functionally, component of the MICOS complex, a large protein complex of the mitochondrial inner membrane that plays crucial roles in the maintenance of crista junctions, inner membrane architecture, and formation of contact sites to the outer membrane. Specifically binds to cardiolipin (in vitro) but not to the precursor lipid phosphatidylglycerol. Plays a crucial role in crista junction formation and mitochondrial function. This Pongo abelii (Sumatran orangutan) protein is MICOS complex subunit MIC27 (APOOL).